The sequence spans 401 residues: Imidazolonepropionase (401 aa).

The Fe(3+) site is built by histidine 70 and histidine 72. Zn(2+)-binding residues include histidine 70 and histidine 72. The 4-imidazolone-5-propanoate site is built by arginine 79, tyrosine 142, and histidine 175. N-formimidoyl-L-glutamate is bound at residue tyrosine 142. Fe(3+) is bound at residue histidine 238. Histidine 238 provides a ligand contact to Zn(2+). Glutamine 241 is a 4-imidazolone-5-propanoate binding site. Aspartate 313 is a binding site for Fe(3+). Aspartate 313 lines the Zn(2+) pocket. N-formimidoyl-L-glutamate is bound by residues asparagine 315 and glycine 317. 4-imidazolone-5-propanoate is bound at residue threonine 318.

Belongs to the metallo-dependent hydrolases superfamily. HutI family. Requires Zn(2+) as cofactor. It depends on Fe(3+) as a cofactor.

It localises to the cytoplasm. It catalyses the reaction 4-imidazolone-5-propanoate + H2O = N-formimidoyl-L-glutamate. Its pathway is amino-acid degradation; L-histidine degradation into L-glutamate; N-formimidoyl-L-glutamate from L-histidine: step 3/3. Functionally, catalyzes the hydrolytic cleavage of the carbon-nitrogen bond in imidazolone-5-propanoate to yield N-formimidoyl-L-glutamate. It is the third step in the universal histidine degradation pathway. This chain is Imidazolonepropionase, found in Xanthomonas campestris pv. campestris (strain 8004).